Here is a 305-residue protein sequence, read N- to C-terminus: Dermonecrotic toxin LrSicTox-alphaIA1ii (305 aa).

Positions 1 to 18 are cleaved as a signal peptide; that stretch reads MLLYVTLILGCWSAFSES. The propeptide occupies 19-26; the sequence is AETDVAER. Residue His37 is part of the active site. Glu57 and Asp59 together coordinate Mg(2+). His73 (nucleophile) is an active-site residue. Disulfide bonds link Cys77–Cys83 and Cys79–Cys222. Asp117 is a Mg(2+) binding site. Asn282 carries N-linked (GlcNAc...) asparagine glycosylation.

This sequence belongs to the arthropod phospholipase D family. Class II subfamily. Class IIa sub-subfamily. Mg(2+) serves as cofactor. As to expression, expressed by the venom gland.

The protein localises to the secreted. It carries out the reaction an N-(acyl)-sphingosylphosphocholine = an N-(acyl)-sphingosyl-1,3-cyclic phosphate + choline. The enzyme catalyses an N-(acyl)-sphingosylphosphoethanolamine = an N-(acyl)-sphingosyl-1,3-cyclic phosphate + ethanolamine. The catalysed reaction is a 1-acyl-sn-glycero-3-phosphocholine = a 1-acyl-sn-glycero-2,3-cyclic phosphate + choline. It catalyses the reaction a 1-acyl-sn-glycero-3-phosphoethanolamine = a 1-acyl-sn-glycero-2,3-cyclic phosphate + ethanolamine. With respect to regulation, inhibited with low affinity by edelfosine. In terms of biological role, dermonecrotic toxins cleave the phosphodiester linkage between the phosphate and headgroup of certain phospholipids (sphingolipid and lysolipid substrates), forming an alcohol (often choline) and a cyclic phosphate. This toxin acts on sphingomyelin (SM). It also acts on a broad range of lysophospholipids, like lysophosphatidylinositol (LPI), lysophosphatidylglycerol (LPG), lysophosphatidylethanolamine (LPE), lysobisphosphatidic acid (LBPA), lysophosphatidylserine (LPS) and lysophosphatidylcholines (LPC) of varying chain lengths. The substrate preference is LPI &gt; LPG &gt; LPS &gt; LPC &gt;&gt; LPE, LBPA. Furthermore, the enzyme also act on cyclic phosphatidic acid and lyso-platelet activating factor (LPAF, an alkyl-LPC). The enzyme does not act on sphingosylphosphorylcholine (SPC, also known as lyso-sphingomyelin) and PAF. The toxin may also act on ceramide phosphoethanolamine (CPE). It acts by transphosphatidylation, releasing exclusively cyclic phosphate products as second products. It does not exhibit detectable PLA1/2 activity. It induces dose-dependent hemolysis and dermonecrosis. Also induces increased vascular permeability, edema, inflammatory response, and platelet aggregation. This Loxosceles reclusa (Brown recluse spider) protein is Dermonecrotic toxin LrSicTox-alphaIA1ii.